Here is a 586-residue protein sequence, read N- to C-terminus: Ezrin (586 aa).

Positions 2–295 constitute an FERM domain; it reads PKPINVRVTT…GNHELYMRRR (294 aa). N6-acetyllysine is present on lysine 60. The [IL]-x-C-x-x-[DE] motif motif lies at 115–120; the sequence is IYCPPE. A Phosphotyrosine; by PDGFR modification is found at tyrosine 146. Residues 244-586 form an interaction with SCYL3 region; that stretch reads EIRNISFNDK…KQRIDEFEAM (343 aa). The stretch at 302-462 forms a coiled coil; it reads VQQMKAQARE…QDDLVKTKEE (161 aa). Residues 306 to 338 are disordered; it reads KAQAREEKHQKQLERQQLETEKKRRETVEREKE. Residues 308 to 338 show a composition bias toward basic and acidic residues; that stretch reads QAREEKHQKQLERQQLETEKKRRETVEREKE. The residue at position 354 (tyrosine 354) is a Phosphotyrosine; by PDGFR. A Phosphoserine modification is found at serine 366. Tyrosine 478 is modified (phosphotyrosine). The disordered stretch occupies residues 534 to 565; that stretch reads LSNELSQARDENKRTHNDIIHNENMRQGRDKY. At serine 535 the chain carries Phosphoserine. Positions 540-565 are enriched in basic and acidic residues; sequence QARDENKRTHNDIIHNENMRQGRDKY. At threonine 567 the chain carries Phosphothreonine; by ROCK2 and PKC/PRKCI.

As to quaternary structure, interacts with PALS1 and NHERF2. Found in a complex with EZR, PODXL and NHERF2. Interacts with MCC, PLEKHG6, PODXL, SCYL3/PACE1, NHERF1 and TMEM8B. Interacts (when phosphorylated) with FES/FPS. Interacts with dimeric S100P, the interaction may be activating through unmasking of F-actin binding sites. Identified in complexes that contain VIM, EZR, AHNAK, BFSP1, BFSP2, ANK2, PLEC, PRX and spectrin. Detected in a complex composed of at least EZR, AHNAK, PPL and PRX. Interacts with PDPN (via cytoplasmic domain); activates RHOA and promotes epithelial-mesenchymal transition. Interacts with SPN/CD43 cytoplasmic tail. Interacts with CD44 and ICAM2. Interacts with SLC9A3; interaction targets SLC9A3 to the apical membrane. Interacts with SLC9A1; regulates interactions of SLC9A1 with cytoskeletal and promotes stress fiber formation. Interacts with CLIC5; may work together in a complex which also includes RDX and MYO6 to stabilize linkages between the plasma membrane and subjacent actin cytoskeleton at the base of stereocilia. In terms of processing, phosphorylated by tyrosine-protein kinases. Phosphorylation by ROCK2 suppresses the head-to-tail association of the N-terminal and C-terminal halves resulting in an opened conformation which is capable of actin and membrane-binding. S-nitrosylation is induced by interferon-gamma and oxidatively-modified low-densitity lipoprotein (LDL(ox)) possibly implicating the iNOS-S100A8/9 transnitrosylase complex. In terms of tissue distribution, detected in eye lens fiber cells. Expressed in cerebrum and cerebellum (at protein level). Component of the microvilli of intestinal epithelial cells.

The protein localises to the apical cell membrane. It is found in the cell projection. The protein resides in the microvillus membrane. It localises to the ruffle membrane. Its subcellular location is the cytoplasm. The protein localises to the cell cortex. It is found in the cytoskeleton. The protein resides in the microvillus. With respect to regulation, a head-to-tail association, of the N-terminal and C-terminal halves results in a closed conformation (inactive form) which is incapable of actin or membrane-binding. Its function is as follows. Probably involved in connections of major cytoskeletal structures to the plasma membrane. In epithelial cells, required for the formation of microvilli and membrane ruffles on the apical pole. Along with PLEKHG6, required for normal macropinocytosis. The sequence is that of Ezrin (Ezr) from Mus musculus (Mouse).